We begin with the raw amino-acid sequence, 289 residues long: 3-methyl-2-oxobutanoate hydroxymethyltransferase (289 aa).

Mg(2+) is bound by residues Asp50 and Asp89. 3-methyl-2-oxobutanoate contacts are provided by residues 50–51 (DS), Asp89, and Lys119. Glu121 provides a ligand contact to Mg(2+). Glu188 (proton acceptor) is an active-site residue. Residues 266–289 (AQHSFGMPEDEQRRWEENVSGADD) are disordered.

This sequence belongs to the PanB family. In terms of assembly, homodecamer; pentamer of dimers. The cofactor is Mg(2+).

Its subcellular location is the cytoplasm. The enzyme catalyses 3-methyl-2-oxobutanoate + (6R)-5,10-methylene-5,6,7,8-tetrahydrofolate + H2O = 2-dehydropantoate + (6S)-5,6,7,8-tetrahydrofolate. The protein operates within cofactor biosynthesis; (R)-pantothenate biosynthesis; (R)-pantoate from 3-methyl-2-oxobutanoate: step 1/2. In terms of biological role, catalyzes the reversible reaction in which hydroxymethyl group from 5,10-methylenetetrahydrofolate is transferred onto alpha-ketoisovalerate to form ketopantoate. This chain is 3-methyl-2-oxobutanoate hydroxymethyltransferase, found in Oleidesulfovibrio alaskensis (strain ATCC BAA-1058 / DSM 17464 / G20) (Desulfovibrio alaskensis).